The chain runs to 362 residues: Fructose-bisphosphate aldolase (362 aa).

Serine 63 contacts D-glyceraldehyde 3-phosphate. Catalysis depends on aspartate 112, which acts as the Proton donor. Zn(2+) is bound by residues histidine 113, aspartate 147, glutamate 177, and histidine 229. Dihydroxyacetone phosphate is bound at residue glycine 230. Histidine 268 lines the Zn(2+) pocket. Dihydroxyacetone phosphate contacts are provided by residues 269–271 (GGS) and 290–293 (NVDT).

The protein belongs to the class II fructose-bisphosphate aldolase family. In terms of assembly, homodimer. It depends on Zn(2+) as a cofactor.

The enzyme catalyses beta-D-fructose 1,6-bisphosphate = D-glyceraldehyde 3-phosphate + dihydroxyacetone phosphate. It functions in the pathway carbohydrate degradation; glycolysis; D-glyceraldehyde 3-phosphate and glycerone phosphate from D-glucose: step 4/4. Catalyzes the aldol condensation of dihydroxyacetone phosphate (DHAP or glycerone-phosphate) with glyceraldehyde 3-phosphate (G3P) to form fructose 1,6-bisphosphate (FBP) in gluconeogenesis and the reverse reaction in glycolysis. This is Fructose-bisphosphate aldolase (fba) from Neurospora crassa (strain ATCC 24698 / 74-OR23-1A / CBS 708.71 / DSM 1257 / FGSC 987).